The chain runs to 295 residues: uncharacterized protein (295 aa).

Positions 8 to 106 (QKTINWIESH…HMPPGAYRTF (99 aa)) constitute an HTH araC/xylS-type domain. Positions 25–46 (EDIVNVSSFSKFHFHRIFQKEV) form a DNA-binding region, H-T-H motif.

In terms of biological role, probable transcriptional regulator. This is an uncharacterized protein from Bacillus subtilis (strain 168).